We begin with the raw amino-acid sequence, 393 residues long: Cysteine protease ATG4B (393 aa).

An N-acetylmethionine modification is found at methionine 1. Residue serine 34 is modified to Phosphoserine. Residue cysteine 74 is the Nucleophile of the active site. Residue cysteine 189 is modified to S-nitrosocysteine. Catalysis depends on residues aspartate 278 and histidine 280. Cysteine 292 and cysteine 301 each carry S-nitrosocysteine. An intrachain disulfide couples cysteine 292 to cysteine 361. Phosphoserine is present on residues serine 316 and serine 383. An LIR motif is present at residues 388 to 391; sequence FEIL. Phosphoserine is present on serine 392.

Belongs to the peptidase C54 family. Interacts with PFKP; promoting phosphorylation of ATG4B at Ser-34. Interacts with GBP7. In terms of processing, phosphorylation at Ser-383 and Ser-392 promotes autophagy by increasing protein delipidation activity without affecting proteolytic activation of ATG8 proteins. Phosphorylation at Ser-316 by ULK1 inhibits autophagy by decreasing both proteolytic activation and delipidation activities. Phosphorylation at Ser-316 is dephosphorylated by protein phosphatase 2A (PP2A). Phosphorylation at Ser-34 by AKT2 promotes its hydrolase activity, leading to increased proteolytic activation and delipidation of ATG8 family proteins. Phosphorylation at Ser-34 by AKT1 promotes mitochondrial localization and inhibition of the F1F0-ATP synthase activity, leading to elevation of mitochondrial reactive oxygen species (ROS). Ubiquitinated by RNF5, leading to its degradation by the proteasome. Post-translationally, S-nitrosylation in response to high glucose decreases both proteolytic activation and delipidation activities. In terms of processing, O-glycosylated by OGT, leading to increase protease activity, thereby promoting the proteolytic activation of ATG8 family proteins. Forms reversible intrachain disulfide bonds in response to oxidative stress. Forms interchain disulfide bonds, leading to formation of homooligomers in response to oxidation.

It localises to the cytoplasm. It is found in the cytosol. Its subcellular location is the cytoplasmic vesicle. The protein resides in the autophagosome. The protein localises to the endoplasmic reticulum. It localises to the mitochondrion. The enzyme catalyses [protein]-C-terminal L-amino acid-glycyl-phosphatidylethanolamide + H2O = [protein]-C-terminal L-amino acid-glycine + a 1,2-diacyl-sn-glycero-3-phosphoethanolamine. It carries out the reaction [protein]-C-terminal L-amino acid-glycyl-phosphatidylserine + H2O = [protein]-C-terminal L-amino acid-glycine + a 1,2-diacyl-sn-glycero-3-phospho-L-serine. Its activity is regulated as follows. Inhibited by N-ethylmaleimide. Redox-regulated during autophagy since reducing conditions activate ATG4A whereas an oxidizing environment such as the presence of H(2)O(2) inhibits its activity. The cysteine protease activity compounds is inhibited by styrylquinoline compounds 4-28 and LV-320. Cysteine protease that plays a key role in autophagy by mediating both proteolytic activation and delipidation of ATG8 family proteins. Required for canonical autophagy (macroautophagy), non-canonical autophagy as well as for mitophagy. The protease activity is required for proteolytic activation of ATG8 family proteins: cleaves the C-terminal amino acid of ATG8 proteins MAP1LC3A, MAP1LC3B, MAP1LC3C, GABARAPL1, GABARAPL2 and GABARAP, to reveal a C-terminal glycine. Exposure of the glycine at the C-terminus is essential for ATG8 proteins conjugation to phosphatidylethanolamine (PE) and insertion to membranes, which is necessary for autophagy. Protease activity is also required to counteract formation of high-molecular weight conjugates of ATG8 proteins (ATG8ylation): acts as a deubiquitinating-like enzyme that removes ATG8 conjugated to other proteins, such as ATG3. In addition to the protease activity, also mediates delipidation of ATG8 family proteins. Catalyzes delipidation of PE-conjugated forms of ATG8 proteins during macroautophagy. Also involved in non-canonical autophagy, a parallel pathway involving conjugation of ATG8 proteins to single membranes at endolysosomal compartments, by catalyzing delipidation of ATG8 proteins conjugated to phosphatidylserine (PS). Compared to other members of the family (ATG4A, ATG4C or ATG4C), constitutes the major protein for proteolytic activation of ATG8 proteins, while it displays weaker delipidation activity than other ATG4 paralogs. Involved in phagophore growth during mitophagy independently of its protease activity and of ATG8 proteins: acts by regulating ATG9A trafficking to mitochondria and promoting phagophore-endoplasmic reticulum contacts during the lipid transfer phase of mitophagy. The protein is Cysteine protease ATG4B of Rattus norvegicus (Rat).